The sequence spans 343 residues: CMP-N-acetylneuraminate-beta-galactosamide-alpha-2,3-sialyltransferase 1 (343 aa).

Residues 1–11 (MAPMRKKSTLK) are Cytoplasmic-facing. A helical; Signal-anchor for type II membrane protein membrane pass occupies residues 12-27 (LLTLLVLFIFLTSFFL). An N-linked (GlcNAc...) asparagine glycan is attached at Asn28. At 28–343 (NYSHTVVTTA…INKIRIFKGR (316 aa)) the chain is on the lumenal side. 3 disulfide bridges follow: Cys62/Cys67, Cys64/Cys142, and Cys145/Cys284. Asn82 carries N-linked (GlcNAc...) asparagine glycosylation. A substrate-binding site is contributed by Gln108. The N-linked (GlcNAc...) asparagine glycan is linked to Asn117. 8 residues coordinate substrate: Asn150, Asn173, Tyr233, Tyr269, Gly273, Gly293, His302, and His319. An N-linked (GlcNAc...) asparagine glycan is attached at Asn326.

It belongs to the glycosyltransferase 29 family. The soluble form derives from the membrane form by proteolytic processing. The long isoform is abundant in salivary gland, liver, lung, and colon mucosa. Both long and short forms are detected in submaxillary salivary glands.

The protein resides in the golgi apparatus. It localises to the golgi stack membrane. It is found in the trans-Golgi network membrane. Its subcellular location is the secreted. It catalyses the reaction a beta-D-galactosyl-(1-&gt;3)-N-acetyl-alpha-D-galactosaminyl derivative + CMP-N-acetyl-beta-neuraminate = an N-acetyl-alpha-neuraminyl-(2-&gt;3)-beta-D-galactosyl-(1-&gt;3)-N-acetyl-alpha-D-galactosaminyl derivative + CMP + H(+). The catalysed reaction is a ganglioside GM1 (d18:1(4E)) + CMP-N-acetyl-beta-neuraminate = a ganglioside GD1a (d18:1(4E)) + CMP + H(+). The enzyme catalyses ganglioside GM1 (d18:1(4E)/18:0) + CMP-N-acetyl-beta-neuraminate = ganglioside GD1a (18:1(4E)/18:0) + CMP + H(+). It carries out the reaction a ganglioside GA1 (d18:1(4E)) + CMP-N-acetyl-beta-neuraminate = a ganglioside GM1b (d18:1(4E)) + CMP + H(+). It catalyses the reaction a ganglioside GD1b + CMP-N-acetyl-beta-neuraminate = a ganglioside GT1b + CMP + H(+). The catalysed reaction is a 3-O-[beta-D-galactosyl-(1-&gt;3)-N-acetyl-alpha-D-galactosaminyl]-L-threonyl-[protein] + CMP-N-acetyl-beta-neuraminate = a 3-O-[N-acetyl-alpha-neuraminyl-(2-&gt;3)-beta-D-galactosyl-(1-&gt;3)-N-acetyl-alpha-D-galactosaminyl]-L-threonyl-[protein] + CMP + H(+). The enzyme catalyses a 3-O-[beta-D-galactosyl-(1-&gt;3)-N-acetyl-alpha-D-galactosaminyl]-L-seryl-[protein] + CMP-N-acetyl-beta-neuraminate = 3-O-[N-acetyl-alpha-neuraminyl-(2-&gt;3)-beta-D-galactosyl-(1-&gt;3)-N-acetyl-alpha-D-galactosaminyl]-L-seryl-[protein] + CMP + H(+). It participates in protein modification; protein glycosylation. Its pathway is glycolipid biosynthesis. In terms of biological role, a beta-galactoside alpha2-&gt;3 sialyltransferase involved in terminal sialylation of glycoproteins and glycolipids. Catalyzes the transfer of sialic acid (N-acetyl-neuraminic acid; Neu5Ac) from the nucleotide sugar donor CMP-Neu5Ac onto acceptor Galbeta-(1-&gt;3)-GalNAc-terminated glycoconjugates through an alpha2-3 linkage. Adds sialic acid to the core 1 O-glycan, Galbeta-(1-&gt;3)-GalNAc-O-Ser/Thr, which is a major structure of mucin-type O-glycans. As part of a homeostatic mechanism that regulates CD8-positive T cell numbers, sialylates core 1 O-glycans of T cell glycoproteins, SPN/CD43 and PTPRC/CD45. Prevents premature apoptosis of thymic CD8-positive T cells prior to peripheral emigration, whereas in the secondary lymphoid organs controls the survival of CD8-positive memory T cells generated following a successful immune response. Transfers sialic acid to asialofetuin, presumably onto Galbeta-(1-&gt;3)-GalNAc-O-Ser. Sialylates GM1a, GA1 and GD1b gangliosides to form GD1a, GM1b and GT1b, respectively. The sequence is that of CMP-N-acetylneuraminate-beta-galactosamide-alpha-2,3-sialyltransferase 1 (ST3GAL1) from Sus scrofa (Pig).